Here is a 100-residue protein sequence, read N- to C-terminus: Urease subunit gamma (100 aa).

This sequence belongs to the urease gamma subunit family. Heterotrimer of UreA (gamma), UreB (beta) and UreC (alpha) subunits. Three heterotrimers associate to form the active enzyme.

Its subcellular location is the cytoplasm. It catalyses the reaction urea + 2 H2O + H(+) = hydrogencarbonate + 2 NH4(+). It participates in nitrogen metabolism; urea degradation; CO(2) and NH(3) from urea (urease route): step 1/1. The sequence is that of Urease subunit gamma from Micrococcus luteus (strain ATCC 4698 / DSM 20030 / JCM 1464 / CCM 169 / CCUG 5858 / IAM 1056 / NBRC 3333 / NCIMB 9278 / NCTC 2665 / VKM Ac-2230) (Micrococcus lysodeikticus).